We begin with the raw amino-acid sequence, 57 residues long: UPF0391 membrane protein Patl_0263 (57 aa).

Helical transmembrane passes span 8 to 28 (FFVLGVIAAVFGFGGVIGVAA) and 30 to 50 (IAKVIFLLCVAFVVLFSVLAF).

Belongs to the UPF0391 family.

The protein localises to the cell membrane. The polypeptide is UPF0391 membrane protein Patl_0263 (Pseudoalteromonas atlantica (strain T6c / ATCC BAA-1087)).